Here is a 271-residue protein sequence, read N- to C-terminus: Calretinin (271 aa).

EF-hand domains are found at residues 16 to 51, 63 to 98, 107 to 142, 151 to 186, 195 to 230, and 235 to 270; these read LTAS…LEKA, NFGE…EENF, GSSA…LLKK, KLQE…QENF, LTSE…LYEK, and MNIQ…SEPP. 25 residues coordinate Ca(2+): Asp-29, Asp-31, Asn-33, Tyr-35, Glu-40, Asp-76, Asn-78, Asp-80, Lys-82, Glu-87, Asp-120, Asp-122, Ser-124, Tyr-126, Glu-131, Asp-164, Asn-166, Asp-168, Lys-170, Glu-175, Asp-208, Asp-210, Ser-212, Tyr-214, and Glu-219. Position 214 is a phosphotyrosine (Tyr-214).

Belongs to the calbindin family.

Its subcellular location is the synapse. The protein resides in the cell projection. It localises to the dendrite. Functionally, calcium-binding protein involved in calcium homeostasis and signal transduction. It plays a critical role in buffering intracellular calcium levels and modulating calcium-dependent signaling pathways. Predominantly expressed in specific neuronal populations, influences synaptic plasticity and neuronal excitability, contributing to learning and memory. During embryonic development, it facilitates neuronal differentiation and maturation. This Rattus norvegicus (Rat) protein is Calretinin (Calb2).